The primary structure comprises 108 residues: Large ribosomal subunit protein uL23 (108 aa).

It belongs to the universal ribosomal protein uL23 family. Part of the 50S ribosomal subunit. Contacts protein L29, and trigger factor when it is bound to the ribosome.

One of the early assembly proteins it binds 23S rRNA. One of the proteins that surrounds the polypeptide exit tunnel on the outside of the ribosome. Forms the main docking site for trigger factor binding to the ribosome. The chain is Large ribosomal subunit protein uL23 from Mycoplasmoides gallisepticum (strain R(low / passage 15 / clone 2)) (Mycoplasma gallisepticum).